The primary structure comprises 431 residues: 4-hydroxy-3-methylbut-2-en-1-yl diphosphate synthase (flavodoxin) (431 aa).

[4Fe-4S] cluster contacts are provided by Cys310, Cys313, Cys356, and Glu363.

Belongs to the IspG family. Requires [4Fe-4S] cluster as cofactor.

It catalyses the reaction (2E)-4-hydroxy-3-methylbut-2-enyl diphosphate + oxidized [flavodoxin] + H2O + 2 H(+) = 2-C-methyl-D-erythritol 2,4-cyclic diphosphate + reduced [flavodoxin]. Its pathway is isoprenoid biosynthesis; isopentenyl diphosphate biosynthesis via DXP pathway; isopentenyl diphosphate from 1-deoxy-D-xylulose 5-phosphate: step 5/6. In terms of biological role, converts 2C-methyl-D-erythritol 2,4-cyclodiphosphate (ME-2,4cPP) into 1-hydroxy-2-methyl-2-(E)-butenyl 4-diphosphate. The polypeptide is 4-hydroxy-3-methylbut-2-en-1-yl diphosphate synthase (flavodoxin) (Rhodopseudomonas palustris (strain HaA2)).